Consider the following 207-residue polypeptide: Cytochrome c biogenesis ATP-binding export protein CcmA (207 aa).

One can recognise an ABC transporter domain in the interval 4–207 (LEVRELLCER…RISLTQTRAV (204 aa)). ATP is bound at residue 36–43 (GSNGAGKT).

This sequence belongs to the ABC transporter superfamily. CcmA exporter (TC 3.A.1.107) family. As to quaternary structure, the complex is composed of two ATP-binding proteins (CcmA) and two transmembrane proteins (CcmB).

It is found in the cell inner membrane. The catalysed reaction is heme b(in) + ATP + H2O = heme b(out) + ADP + phosphate + H(+). Functionally, part of the ABC transporter complex CcmAB involved in the biogenesis of c-type cytochromes; once thought to export heme, this seems not to be the case, but its exact role is uncertain. Responsible for energy coupling to the transport system. The sequence is that of Cytochrome c biogenesis ATP-binding export protein CcmA from Escherichia coli O157:H7.